The primary structure comprises 329 residues: Probable acyltransferase FabY (329 aa).

The N-acetyltransferase domain occupies 18–162 (YHLRVPQTEE…RHFLMIKPVA (145 aa)).

This sequence belongs to the acetyltransferase family. FabY subfamily.

It participates in lipid metabolism; fatty acid biosynthesis. Its function is as follows. Supports initiation of fatty acid biosynthesis in the absence of FabH. This is Probable acyltransferase FabY from Escherichia coli O157:H7.